The sequence spans 240 residues: Uridylate kinase (240 aa).

Lys12–Gly15 serves as a coordination point for ATP. The tract at residues Gly20–Gly25 is involved in allosteric activation by GTP. A UMP-binding site is contributed by Gly54. ATP-binding residues include Gly55 and Arg59. UMP is bound by residues Asp74 and Thr135 to Thr142. ATP contacts are provided by Tyr168 and Asp171.

It belongs to the UMP kinase family. Homohexamer.

The protein resides in the cytoplasm. It catalyses the reaction UMP + ATP = UDP + ADP. The protein operates within pyrimidine metabolism; CTP biosynthesis via de novo pathway; UDP from UMP (UMPK route): step 1/1. Its activity is regulated as follows. Allosterically activated by GTP. Inhibited by UTP. Its function is as follows. Catalyzes the reversible phosphorylation of UMP to UDP. The protein is Uridylate kinase of Moorella thermoacetica (strain ATCC 39073 / JCM 9320).